Reading from the N-terminus, the 442-residue chain is Adenylosuccinate synthetase (442 aa).

GTP is bound by residues 16–22 (GDEGKGK) and 44–46 (GHT). Aspartate 17 functions as the Proton acceptor in the catalytic mechanism. 2 residues coordinate Mg(2+): aspartate 17 and glycine 44. Residues 17 to 20 (DEGK), 42 to 45 (NAGH), threonine 133, arginine 147, glutamine 228, threonine 243, and arginine 307 contribute to the IMP site. Histidine 45 acts as the Proton donor in catalysis. Residue 303-309 (AVTGRPR) participates in substrate binding. Residues arginine 309, 335–337 (KLD), and 417–419 (STG) each bind GTP.

Belongs to the adenylosuccinate synthetase family. In terms of assembly, homodimer. Mg(2+) serves as cofactor.

The protein resides in the cytoplasm. The enzyme catalyses IMP + L-aspartate + GTP = N(6)-(1,2-dicarboxyethyl)-AMP + GDP + phosphate + 2 H(+). Its pathway is purine metabolism; AMP biosynthesis via de novo pathway; AMP from IMP: step 1/2. Its function is as follows. Plays an important role in the de novo pathway of purine nucleotide biosynthesis. Catalyzes the first committed step in the biosynthesis of AMP from IMP. This chain is Adenylosuccinate synthetase, found in Koribacter versatilis (strain Ellin345).